A 165-amino-acid chain; its full sequence is ATP synthase subunit b (165 aa).

A helical membrane pass occupies residues 7–27; that stretch reads GTSLGNLLIVTGSFILLLLLV.

This sequence belongs to the ATPase B chain family. In terms of assembly, F-type ATPases have 2 components, F(1) - the catalytic core - and F(0) - the membrane proton channel. F(1) has five subunits: alpha(3), beta(3), gamma(1), delta(1), epsilon(1). F(0) has three main subunits: a(1), b(2) and c(10-14). The alpha and beta chains form an alternating ring which encloses part of the gamma chain. F(1) is attached to F(0) by a central stalk formed by the gamma and epsilon chains, while a peripheral stalk is formed by the delta and b chains.

The protein resides in the cell membrane. In terms of biological role, f(1)F(0) ATP synthase produces ATP from ADP in the presence of a proton or sodium gradient. F-type ATPases consist of two structural domains, F(1) containing the extramembraneous catalytic core and F(0) containing the membrane proton channel, linked together by a central stalk and a peripheral stalk. During catalysis, ATP synthesis in the catalytic domain of F(1) is coupled via a rotary mechanism of the central stalk subunits to proton translocation. Functionally, component of the F(0) channel, it forms part of the peripheral stalk, linking F(1) to F(0). This Streptococcus mutans serotype c (strain ATCC 700610 / UA159) protein is ATP synthase subunit b.